Consider the following 104-residue polypeptide: Flagellar hook-basal body complex protein FliE (104 aa).

This sequence belongs to the FliE family.

The protein resides in the bacterial flagellum basal body. The protein is Flagellar hook-basal body complex protein FliE of Serratia proteamaculans (strain 568).